The sequence spans 190 residues: Small ribosomal subunit protein mS23 (190 aa).

Alanine 2 carries the N-acetylalanine modification. Lysine 102 carries the N6-acetyllysine modification. Positions 139 to 190 are disordered; that stretch reads RTQHGGSHVSRKSEHLSVRPQTALEENETQKEVPQDQHLEAPADQSKGLLPP. The segment covering 166–179 has biased composition (basic and acidic residues); the sequence is ETQKEVPQDQHLEA.

The protein belongs to the mitochondrion-specific ribosomal protein mS23 family. As to quaternary structure, component of the mitochondrial small ribosomal subunit (mt-SSU). Mature mammalian 55S mitochondrial ribosomes consist of a small (28S) and a large (39S) subunit. The 28S small subunit contains a 12S ribosomal RNA (12S mt-rRNA) and 30 different proteins. The 39S large subunit contains a 16S rRNA (16S mt-rRNA), a copy of mitochondrial valine transfer RNA (mt-tRNA(Val)), which plays an integral structural role, and 52 different proteins.

Its subcellular location is the mitochondrion. The sequence is that of Small ribosomal subunit protein mS23 (MRPS23) from Homo sapiens (Human).